Here is a 232-residue protein sequence, read N- to C-terminus: Orotidine 5'-phosphate decarboxylase (232 aa).

Residues aspartate 13, lysine 35, 62–71 (DLKFHDIPNT), threonine 121, arginine 182, glutamine 191, glycine 211, and arginine 212 contribute to the substrate site. The active-site Proton donor is lysine 64.

The protein belongs to the OMP decarboxylase family. Type 1 subfamily. As to quaternary structure, homodimer.

It carries out the reaction orotidine 5'-phosphate + H(+) = UMP + CO2. It functions in the pathway pyrimidine metabolism; UMP biosynthesis via de novo pathway; UMP from orotate: step 2/2. Catalyzes the decarboxylation of orotidine 5'-monophosphate (OMP) to uridine 5'-monophosphate (UMP). The polypeptide is Orotidine 5'-phosphate decarboxylase (Teredinibacter turnerae (strain ATCC 39867 / T7901)).